A 796-amino-acid chain; its full sequence is RNA cytosine-C(5)-methyltransferase NSUN2 (796 aa).

The segment covering methionine 1–glutamine 11 has biased composition (basic residues). Residues methionine 1–glycine 36 form a disordered region. Over residues glycine 22 to glycine 36 the composition is skewed to gly residues. S-adenosyl-L-methionine contacts are provided by residues cysteine 184–lysine 190, aspartate 215, aspartate 242, and aspartate 268. Cysteine 321 acts as the Nucleophile in catalysis. Disordered regions lie at residues tryptophan 435–proline 501 and arginine 707–aspartate 796. Composition is skewed to basic and acidic residues over residues alanine 467 to glutamine 483, lysine 708 to glutamine 721, and valine 733 to alanine 746. Residues cysteine 774–asparagine 783 show a composition bias toward polar residues. Residues glutamine 784 to aspartate 796 show a composition bias toward basic and acidic residues.

It belongs to the class I-like SAM-binding methyltransferase superfamily. RsmB/NOP family. TRM4 subfamily.

It localises to the nucleus. The protein localises to the nucleolus. It is found in the cytoplasm. Its subcellular location is the mitochondrion. The protein resides in the cytoskeleton. It localises to the spindle. The protein localises to the secreted. It is found in the extracellular exosome. It carries out the reaction cytidine(48) in tRNA + S-adenosyl-L-methionine = 5-methylcytidine(48) in tRNA + S-adenosyl-L-homocysteine + H(+). The catalysed reaction is cytidine(49) in tRNA + S-adenosyl-L-methionine = 5-methylcytidine(49) in tRNA + S-adenosyl-L-homocysteine + H(+). The enzyme catalyses cytidine(50) in tRNA + S-adenosyl-L-methionine = 5-methylcytidine(50) in tRNA + S-adenosyl-L-homocysteine + H(+). It catalyses the reaction cytidine(34) in tRNA precursor + S-adenosyl-L-methionine = 5-methylcytidine(34) in tRNA precursor + S-adenosyl-L-homocysteine + H(+). It carries out the reaction a cytidine in mRNA + S-adenosyl-L-methionine = a 5-methylcytidine in mRNA + S-adenosyl-L-homocysteine + H(+). In terms of biological role, RNA cytosine C(5)-methyltransferase that methylates cytosine to 5-methylcytosine (m5C) in various RNAs, such as tRNAs, mRNAs and some long non-coding RNAs (lncRNAs). Involved in various processes, such as epidermal stem cell differentiation, testis differentiation and maternal to zygotic transition during early development: acts by increasing protein synthesis; cytosine C(5)-methylation promoting tRNA stability and preventing mRNA decay. Methylates cytosine to 5-methylcytosine (m5C) at positions 34 and 48 of intron-containing tRNA(Leu)(CAA) precursors, and at positions 48, 49 and 50 of tRNA(Gly)(GCC) precursors. tRNA methylation is required generation of RNA fragments derived from tRNAs (tRFs). Also mediates C(5)-methylation of mitochondrial tRNAs. Catalyzes cytosine C(5)-methylation of mRNAs, leading to stabilize them and prevent mRNA decay. Cytosine C(5)-methylation of mRNAs also regulates mRNA export. Also mediates cytosine C(5)-methylation of non-coding RNAs, such as vault RNAs (vtRNAs), promoting their processing into regulatory small RNAs. Required for proper spindle assembly and chromosome segregation, independently of its methyltransferase activity. The polypeptide is RNA cytosine-C(5)-methyltransferase NSUN2 (Gallus gallus (Chicken)).